The chain runs to 333 residues: MLAYAMRRLLLLIPVLIGMTIVTFSIIHLIPGNPAQTILGEQASPQAIADLEERLGLNEPYWVQYGLYMKDLATGDLGTSLRTNKPIMEEIWPYLAATIELTIFAMIFAIIIGVNAGIVSAWKQNSWFDYLSMFIALVGVSMPIFWLALMEQWIFAQELGWLPAFGRDNPRDPIISTTGLYVFDTIISGQFDKTWESIKHLILPGIALGTIPMAIIARMTRSSMLEVLRSDYIRTVNAKGSGQGVVIYKHALKNALIPVLTVVGLQTGNLLGGAILTETIFSWPGIGRYIFEAINYRDYPVIQSGILVVATIFVLINLFVDLLYSYIDPRIKY.

Transmembrane regions (helical) follow at residues 10-30 (LLLI…IHLI), 99-119 (IELT…AGIV), 130-150 (YLSM…LALM), 197-217 (SIKH…AIIA), 256-276 (LIPV…GAIL), and 300-320 (PVIQ…NLFV). The 230-residue stretch at 95 to 324 (LAATIELTIF…LINLFVDLLY (230 aa)) folds into the ABC transmembrane type-1 domain.

The protein belongs to the binding-protein-dependent transport system permease family. OppBC subfamily.

It localises to the cell membrane. In terms of biological role, probably part of the ABC transporter Dpp involved in dipeptide transport. Responsible for the translocation of the substrate across the membrane. This is Dipeptide transport system permease protein DppB (dppB) from Alkalihalophilus pseudofirmus (strain ATCC BAA-2126 / JCM 17055 / OF4) (Bacillus pseudofirmus).